The primary structure comprises 92 residues: MARSLKKGPYVDLHLLKKVDAARASNDKRPIKTWSRRSTILPDFIGLTIAVHNGRTHVPVFISDNMVGHKLGEFSLTRTFKGHLADKKAKKK.

Belongs to the universal ribosomal protein uS19 family.

Its function is as follows. Protein S19 forms a complex with S13 that binds strongly to the 16S ribosomal RNA. In Neisseria meningitidis serogroup C (strain 053442), this protein is Small ribosomal subunit protein uS19.